A 309-amino-acid chain; its full sequence is Probable manganese-dependent inorganic pyrophosphatase (309 aa).

Mn(2+)-binding residues include histidine 9, aspartate 13, aspartate 15, aspartate 75, histidine 97, and aspartate 149.

This sequence belongs to the PPase class C family. Mn(2+) is required as a cofactor.

The protein resides in the cytoplasm. The catalysed reaction is diphosphate + H2O = 2 phosphate + H(+). The polypeptide is Probable manganese-dependent inorganic pyrophosphatase (Exiguobacterium sp. (strain ATCC BAA-1283 / AT1b)).